Consider the following 271-residue polypeptide: Ribosomal RNA small subunit methyltransferase A (271 aa).

H11, L13, G38, E59, D84, and N109 together coordinate S-adenosyl-L-methionine.

It belongs to the class I-like SAM-binding methyltransferase superfamily. rRNA adenine N(6)-methyltransferase family. RsmA subfamily.

It localises to the cytoplasm. It carries out the reaction adenosine(1518)/adenosine(1519) in 16S rRNA + 4 S-adenosyl-L-methionine = N(6)-dimethyladenosine(1518)/N(6)-dimethyladenosine(1519) in 16S rRNA + 4 S-adenosyl-L-homocysteine + 4 H(+). Functionally, specifically dimethylates two adjacent adenosines (A1518 and A1519) in the loop of a conserved hairpin near the 3'-end of 16S rRNA in the 30S particle. May play a critical role in biogenesis of 30S subunits. The polypeptide is Ribosomal RNA small subunit methyltransferase A (Nostoc sp. (strain PCC 7120 / SAG 25.82 / UTEX 2576)).